Reading from the N-terminus, the 760-residue chain is Transmembrane channel-like protein 1 (760 aa).

The segment at methionine 1–glutamate 80 is disordered. At methionine 1–glycine 182 the chain is on the cytoplasmic side. Positions lysine 13–glutamate 29 are enriched in acidic residues. The span at aspartate 30–arginine 39 shows a compositional bias: basic and acidic residues. The residue at position 37 (serine 37) is a Phosphoserine. Residue threonine 45 is modified to Phosphothreonine. Over residues asparagine 50–glutamate 61 the composition is skewed to acidic residues. Serine 128 carries the phosphoserine modification. The helical transmembrane segment at serine 183–proline 220 threads the bilayer. The Extracellular portion of the chain corresponds to tyrosine 221–phenylalanine 271. A helical membrane pass occupies residues arginine 272–aspartate 303. At glycine 304 to histidine 359 the chain is on the cytoplasmic side. Serine 314 is subject to Phosphoserine. The chain crosses the membrane as a helical span at residues leucine 360–serine 390. Topologically, residues glutamine 391–glycine 402 are extracellular. A Phosphothreonine modification is found at threonine 400. Residues tryptophan 403–leucine 430 traverse the membrane as a helical segment. At glutamate 431–histidine 434 the chain is on the cytoplasmic side. A helical membrane pass occupies residues proline 435–isoleucine 469. The Extracellular segment spans residues glutamate 470 to cysteine 515. A helical transmembrane segment spans residues tryptophan 516 to cysteine 553. The Cytoplasmic segment spans residues asparagine 554–aspartate 572. The chain crosses the membrane as a helical span at residues isoleucine 573–phenylalanine 593. Residues alanine 594 to serine 596 lie on the Extracellular side of the membrane. The helical transmembrane segment at leucine 597 to cysteine 619 threads the bilayer. At asparagine 620–asparagine 633 the chain is on the cytoplasmic side. The helical transmembrane segment at asparagine 634–serine 657 threads the bilayer. The Extracellular segment spans residues leucine 658–glycine 700. Residues leucine 701 to methionine 734 traverse the membrane as a helical segment. Over lysine 735 to glutamine 760 the chain is Cytoplasmic.

This sequence belongs to the TMC family. As to quaternary structure, forms the MET channel complosed of TMC dimer (TMC1 or TMC2), TMIE, TOMT, CIB (CIB2 or CIB3), LHFPL5 and PDH15. The interaction of TMC1 and TMC2 with TOMT is required for the transportation of TMC1/2 into the stereocilia of hair cells. Interacts (via N-terminus) with both isoforms CD1 and CD3 of PCDH15. Can form a heterodimer with TMC2, TMC5 or TMC7. In terms of tissue distribution, detected in fetal cochlea, and at low levels in placenta and testis.

It is found in the cell membrane. It carries out the reaction Ca(2+)(in) = Ca(2+)(out). Pore-forming subunit of the mechanotransducer (MET) non-selective cation channel complex located at the tips of stereocilia of cochlear hair cells and that mediates sensory transduction in the auditory system. The MET complex is composed of two dimeric pore-forming ion-conducting transmembrane TMC (TMC1 or TMC2) subunits, and aided by several auxiliary proteins including LHFPL5, TMIE, CIB2/3 and TOMT, and the tip-link PCDH15. MET channel is activated by tension in the tip-link extending from the side wall of one stereocilium to the tip of the adjacent shorter stereocilium, where the channel is located. TMC1 MET channel is highly permeable to calcium and likely transports monovalent cations. Also involved in vestibular hair cells transduction current. This Homo sapiens (Human) protein is Transmembrane channel-like protein 1.